The sequence spans 371 residues: 4-hydroxyphenylpyruvate dioxygenase-like protein (371 aa).

VOC domains follow at residues 7 to 135 (RLCH…LLQR) and 160 to 328 (HVDH…VFTK). Fe cation is bound by residues His163, His258, and Glu339.

The protein belongs to the 4HPPD family. It depends on Fe cation as a cofactor.

It localises to the mitochondrion. The enzyme catalyses 3-(4-hydroxyphenyl)pyruvate + O2 = (S)-4-hydroxymandelate + CO2. Its function is as follows. Iron-dependent dioxygenase that catalyzes the conversion of 4-hydroxyphenylpyruvate (4-HPPA) to 4-hydroxymandelate (4-HMA) in the mitochondria, one of the steps in the biosynthesis of coenzyme Q10 from tyrosine. The polypeptide is 4-hydroxyphenylpyruvate dioxygenase-like protein (Rattus norvegicus (Rat)).